A 144-amino-acid polypeptide reads, in one-letter code: MLMPKKVKYRKQQRGRMRGKAWRGSELSFGDYGLKVMECGYITDRQIEASRIAMTRFIKRGGKIWLRLFPDKPITKKPAETRMGKGKGAPDHWVAVVRPGKVLFEMEGVSPEMAQEAMRLAANKLPLKTRFVMRHDVKTTVAAK.

This sequence belongs to the universal ribosomal protein uL16 family. Part of the 50S ribosomal subunit.

In terms of biological role, binds 23S rRNA and is also seen to make contacts with the A and possibly P site tRNAs. The chain is Large ribosomal subunit protein uL16 from Acidobacterium capsulatum (strain ATCC 51196 / DSM 11244 / BCRC 80197 / JCM 7670 / NBRC 15755 / NCIMB 13165 / 161).